We begin with the raw amino-acid sequence, 576 residues long: DM7 family protein GD16138 (576 aa).

A disordered region spans residues 454–481; the sequence is FPELEPDSEPEPEPEPQTEDEGEDEGDK. Residues 457 to 478 show a composition bias toward acidic residues; it reads LEPDSEPEPEPEPQTEDEGEDE.

Belongs to the DM7 family.

This is DM7 family protein GD16138 from Drosophila simulans (Fruit fly).